The following is a 248-amino-acid chain: Anamorsin homolog (248 aa).

The segment at 4 to 129 (FKGLQKSLYI…ETGSSARLSF (126 aa)) is N-terminal SAM-like domain. Positions 130–161 (AKKNANAVNVWKISGDDEELIDEEELLDEEDK) are linker. Residues C172, C181, C184, and C186 each contribute to the [2Fe-2S] cluster site. Positions 172–186 (CSTTGKRKACKNCSC) are fe-S binding site A. Positions 209, 212, 220, and 223 each coordinate [4Fe-4S] cluster. 2 short sequence motifs (cx2C motif) span residues 209 to 212 (CGNC) and 220 to 223 (CSTC). The interval 209-223 (CGNCYLGDAFRCSTC) is fe-S binding site B.

The protein belongs to the anamorsin family. In terms of assembly, monomer. [2Fe-2S] cluster serves as cofactor. It depends on [4Fe-4S] cluster as a cofactor.

The protein localises to the cytoplasm. It is found in the mitochondrion intermembrane space. In terms of biological role, component of the cytosolic iron-sulfur (Fe-S) protein assembly (CIA) machinery. Required for the maturation of extramitochondrial Fe-S proteins. Part of an electron transfer chain functioning in an early step of cytosolic Fe-S biogenesis, facilitating the de novo assembly of a [4Fe-4S] cluster on the cytosolic Fe-S scaffold complex. Electrons are transferred from NADPH via a FAD- and FMN-containing diflavin oxidoreductase. Together with the diflavin oxidoreductase, also required for the assembly of the diferric tyrosyl radical cofactor of ribonucleotide reductase (RNR), probably by providing electrons for reduction during radical cofactor maturation in the catalytic small subunit. The sequence is that of Anamorsin homolog from Drosophila simulans (Fruit fly).